The following is a 1473-amino-acid chain: G8 domain-containing protein DDB_G0286311 (1473 aa).

The first 21 residues, 1 to 21, serve as a signal peptide directing secretion; sequence MKRFFIVILFILLVCIFNVKS. A helical membrane pass occupies residues 105-125; the sequence is IVLMIATITGSLLFIRFNIGF. N-linked (GlcNAc...) asparagine glycosylation is present at asparagine 126. The helical transmembrane segment at 130–150 threads the bilayer; that stretch reads TLIILIIGTIFLIGSSHSITL. N-linked (GlcNAc...) asparagine glycans are attached at residues asparagine 203, asparagine 241, and asparagine 275. Over residues 298-375 the composition is skewed to low complexity; sequence TGTTPTTTPT…PTTTPTTTPT (78 aa). The tract at residues 298 to 400 is disordered; sequence TGTTPTTTPT…SSSPSSPSFS (103 aa). Residues 376–389 are compositionally biased toward polar residues; sequence DSCPTTSTWRPTMA. Low complexity predominate over residues 390-400; that stretch reads SSSSPSSPSFS. Asparagine 444, asparagine 637, asparagine 680, asparagine 1078, asparagine 1088, asparagine 1176, asparagine 1206, asparagine 1225, asparagine 1389, and asparagine 1424 each carry an N-linked (GlcNAc...) asparagine glycan. One can recognise a G8 domain in the interval 626-754; sequence SIWSSGIVPL…YHNTWSKLST (129 aa).

This sequence belongs to the comF family.

Its subcellular location is the membrane. The polypeptide is G8 domain-containing protein DDB_G0286311 (Dictyostelium discoideum (Social amoeba)).